The sequence spans 568 residues: Proline--tRNA ligase (568 aa).

This sequence belongs to the class-II aminoacyl-tRNA synthetase family. ProS type 1 subfamily. As to quaternary structure, homodimer.

The protein localises to the cytoplasm. The enzyme catalyses tRNA(Pro) + L-proline + ATP = L-prolyl-tRNA(Pro) + AMP + diphosphate. Catalyzes the attachment of proline to tRNA(Pro) in a two-step reaction: proline is first activated by ATP to form Pro-AMP and then transferred to the acceptor end of tRNA(Pro). As ProRS can inadvertently accommodate and process non-cognate amino acids such as alanine and cysteine, to avoid such errors it has two additional distinct editing activities against alanine. One activity is designated as 'pretransfer' editing and involves the tRNA(Pro)-independent hydrolysis of activated Ala-AMP. The other activity is designated 'posttransfer' editing and involves deacylation of mischarged Ala-tRNA(Pro). The misacylated Cys-tRNA(Pro) is not edited by ProRS. In Lysinibacillus sphaericus (strain C3-41), this protein is Proline--tRNA ligase.